The following is a 464-amino-acid chain: Macrophage metalloelastase (464 aa).

Residues 1–17 (MKFLLLILTLWVTSSGA) form the signal peptide. Positions 18-100 (DPLKENDMLF…DVYHFKTMPG (83 aa)) are cleaved as a propeptide — activation peptide. Asparagine 69 carries N-linked (GlcNAc...) asparagine glycosylation. The Cysteine switch signature appears at 85–92 (PRCGVPDV). Residue cysteine 87 coordinates Zn(2+). Ca(2+) contacts are provided by aspartate 119 and aspartate 153. Histidine 163 and aspartate 165 together coordinate Zn(2+). Ca(2+)-binding residues include aspartate 170, glycine 171, glycine 173, and valine 175. Histidine 178 contacts Zn(2+). The Ca(2+) site is built by glycine 185, glycine 187, and aspartate 189. Histidine 191 contributes to the Zn(2+) binding site. Aspartate 193, glutamate 194, and glutamate 196 together coordinate Ca(2+). Histidine 213 is a Zn(2+) binding site. Glutamate 214 is a catalytic residue. Zn(2+) is bound by residues histidine 217 and histidine 223. Hemopexin repeat units lie at residues 274 to 323 (PTAC…WPTL), 324 to 370 (PSGI…GFPD), 372 to 420 (VKKI…FPGI), and 421 to 464 (GPKI…WFDC). The cysteines at positions 277 and 464 are disulfide-linked. Residues aspartate 284, glutamate 328, aspartate 376, and aspartate 425 each coordinate Ca(2+).

It belongs to the peptidase M10A family. Ca(2+) is required as a cofactor. Requires Zn(2+) as cofactor.

It is found in the secreted. It localises to the extracellular space. Its subcellular location is the extracellular matrix. The catalysed reaction is Hydrolysis of soluble and insoluble elastin. Specific cleavages are also produced at 14-Ala-|-Leu-15 and 16-Tyr-|-Leu-17 in the B chain of insulin.. Functionally, may be involved in tissue injury and remodeling. Has significant elastolytic activity. Can accept large and small amino acids at the P1' site, but has a preference for leucine. Aromatic or hydrophobic residues are preferred at the P1 site, with small hydrophobic residues (preferably alanine) occupying P3. The polypeptide is Macrophage metalloelastase (MMP12) (Oryctolagus cuniculus (Rabbit)).